Reading from the N-terminus, the 1096-residue chain is Eukaryotic translation initiation factor 3 subunit A (1096 aa).

Residues 323-502 (QATRVLLATL…GSIHFGAADA (180 aa)) enclose the PCI domain. Coiled coils occupy residues 591–643 (SERQ…IDRK), 677–761 (SVLR…RMQK), and 811–839 (KEGA…ERRA). Over residues 808–852 (ELPKEGAEERMASAREVAEQTRRDEQEKERRAVRESQRPSKREIV) the composition is skewed to basic and acidic residues. A disordered region spans residues 808–1096 (ELPKEGAEER…ADDDRNWRQK (289 aa)). Residues 865–875 (AQPTQPRTISS) show a composition bias toward polar residues. Composition is skewed to basic and acidic residues over residues 878-890 (FGER…RYRE), 933-942 (SNREQARGEA), and 955-973 (QRDR…KRGE). Positions 1008–1023 (DSSQRTSAATPTTQPW) are enriched in polar residues. Residues 1085-1096 (GAADDDRNWRQK) are compositionally biased toward basic and acidic residues.

It belongs to the eIF-3 subunit A family. In terms of assembly, component of the eukaryotic translation initiation factor 3 (eIF-3) complex.

The protein localises to the cytoplasm. Its function is as follows. RNA-binding component of the eukaryotic translation initiation factor 3 (eIF-3) complex, which is involved in protein synthesis of a specialized repertoire of mRNAs and, together with other initiation factors, stimulates binding of mRNA and methionyl-tRNAi to the 40S ribosome. The eIF-3 complex specifically targets and initiates translation of a subset of mRNAs involved in cell proliferation. This chain is Eukaryotic translation initiation factor 3 subunit A, found in Brugia malayi (Filarial nematode worm).